A 126-amino-acid chain; its full sequence is Fluoride-specific ion channel FluC 2 (126 aa).

A run of 4 helical transmembrane segments spans residues 11-31 (VLLI…ICEH), 36-56 (LGIL…MYDA), 69-89 (AFGT…VQSF), and 93-113 (FLPA…GVFF). Residues G76 and T79 each contribute to the Na(+) site.

Belongs to the fluoride channel Fluc/FEX (TC 1.A.43) family.

It localises to the cell membrane. The enzyme catalyses fluoride(in) = fluoride(out). Na(+) is not transported, but it plays an essential structural role and its presence is essential for fluoride channel function. Its function is as follows. Fluoride-specific ion channel. Important for reducing fluoride concentration in the cell, thus reducing its toxicity. The sequence is that of Fluoride-specific ion channel FluC 2 from Methanosarcina mazei (strain ATCC BAA-159 / DSM 3647 / Goe1 / Go1 / JCM 11833 / OCM 88) (Methanosarcina frisia).